Consider the following 413-residue polypeptide: ORC1-type DNA replication protein 2 (413 aa).

Residues threonine 70–alanine 74, tyrosine 217, and arginine 229 contribute to the ATP site.

It belongs to the CDC6/cdc18 family. Monomer. Interacts with Cdc6-3, MCM and PolB1. In terms of processing, autophosphorylated in vitro.

Its function is as follows. Involved in regulation of DNA replication. May play essential roles in origin recognition and cell cycle control of replication. Binds both single-stranded and double-stranded DNA, with a preference for molecules that contain a bubble, a fork, or a tail. Has a weak ATPase activity. Stimulates the binding of the MCM helicase to the origin DNA, but strongly inhibits ATPase and DNA helicase activities of MCM. Also regulates the DNA polymerase and the nuclease activities of PolB1. The polypeptide is ORC1-type DNA replication protein 2 (cdc6-2) (Saccharolobus solfataricus (strain ATCC 35092 / DSM 1617 / JCM 11322 / P2) (Sulfolobus solfataricus)).